We begin with the raw amino-acid sequence, 223 residues long: Triosephosphate isomerase (223 aa).

Residue 10–12 (NFK) coordinates substrate. Histidine 94 acts as the Electrophile in catalysis. The active-site Proton acceptor is glutamate 142. Substrate-binding positions include isoleucine 147, glycine 182, and 203–204 (AS).

Belongs to the triosephosphate isomerase family. Homotetramer; dimer of dimers.

It is found in the cytoplasm. The catalysed reaction is D-glyceraldehyde 3-phosphate = dihydroxyacetone phosphate. It functions in the pathway carbohydrate biosynthesis; gluconeogenesis. Its pathway is carbohydrate degradation; glycolysis; D-glyceraldehyde 3-phosphate from glycerone phosphate: step 1/1. In terms of biological role, involved in the gluconeogenesis. Catalyzes stereospecifically the conversion of dihydroxyacetone phosphate (DHAP) to D-glyceraldehyde-3-phosphate (G3P). The chain is Triosephosphate isomerase from Archaeoglobus fulgidus (strain ATCC 49558 / DSM 4304 / JCM 9628 / NBRC 100126 / VC-16).